Consider the following 359-residue polypeptide: Trans-enoyl reductase FSL5 (359 aa).

An NADP(+)-binding site is contributed by 47–50 (IDGK). 134–141 (SGVGTIGL) lines the substrate pocket. NADP(+) contacts are provided by residues 169–172 (STAT), 192–195 (SPHN), Tyr-210, and 257–258 (LE). 277–281 (GPTLL) provides a ligand contact to substrate. 346-347 (VS) is an NADP(+) binding site.

It belongs to the zinc-containing alcohol dehydrogenase family. In terms of assembly, monomer.

It participates in secondary metabolite biosynthesis. Trans-enoyl reductase; part of the gene cluster that mediates the biosynthesis of fusarielins F, G and H, decaketide compounds with 5 methylations and a decaline core that act as mycoestrogens as they stimulate growth of MCF-7 breast cancer cells. The initial compound in the pathway is produced by the reducing polyketide synthase FSL1. FSL1 lacks an active enoyl reductase (ER) domain and biosynthesis of fusarielins relies on the trans-acting enoyl reductase FSL5, before it is released through hydrolysis catalyzed by the thioesterase FSL2. Fusarielins F, G, and H have a C11=C12 cis double bond and is fully reduced between C10 and C11 and between C12 and C13. FSL3 can be involved in the formation of the C11=C12 cis double bond by moving a hypothetical C10=C11 or C12=C13 trans double bond to form prefusarielin. Prefusarielin is oxygenated at C15 and C16 by the cytochrome P450 monooxygenase FSL4, resulting in fusarielin F, which subsequently is epoxidized into fusarielin G by the same enzyme. The final step in the pathway is a reduction of the carboxylic acid moiety to yield fusarielin H via a still undetermined mechanism. This chain is Trans-enoyl reductase FSL5, found in Gibberella zeae (strain ATCC MYA-4620 / CBS 123657 / FGSC 9075 / NRRL 31084 / PH-1) (Wheat head blight fungus).